A 729-amino-acid polypeptide reads, in one-letter code: Ubiquitin carboxyl-terminal hydrolase BAP1 (729 aa).

The region spanning 4–235 is the UCH catalytic domain; it reads GWLELESDPG…IRFNLMAVVP (232 aa). The short motif at 56 to 60 is the Arg-finger motif element; it reads RRSRR. Cys-91 acts as the Nucleophile in catalysis. The Proton donor role is filled by His-169. Phosphoserine is present on Ser-292. The interval 301-351 is disordered; sequence APAASEGNHTDGAEEAAGSCAQAPSHSPPNKPKLVVKPPGSSLNGVHPNPT. Positions 363–366 match the HBM-like motif motif; that stretch reads NHNY. A phosphoserine mark is found at Ser-369 and Ser-395. 2 disordered regions span residues 372-435 and 464-524; these read QEEE…SADG and SIKT…SPVT. A compositionally biased stretch (acidic residues) spans 395–409; the sequence is SDDEDDYEDDEEDDV. Residues 480–524 are compositionally biased toward polar residues; the sequence is THSQPSPTPSNESTDTASEIGSAFNSPLRSPIRSANPTRPSSPVT. The residue at position 493 (Thr-493) is a Phosphothreonine. Residues Ser-521, Ser-537, Ser-585, and Ser-597 each carry the phosphoserine modification. A disordered region spans residues 575 to 623; it reads LTEGGKGSSPSIRPIQGSQGSSSPVEKEVVEATDSREKTGMVRPGEPLS. Polar residues predominate over residues 582–598; it reads SSPSIRPIQGSQGSSSP. Positions 596 to 721 are interaction with BRCA1; that stretch reads SSPVEKEVVE…QRKPDRRKRS (126 aa). The span at 599–614 shows a compositional bias: basic and acidic residues; that stretch reads VEKEVVEATDSREKTG. Residues 636–656 are a coiled coil; it reads LKCVEAEIANYEACLKEEVEK. An interaction with YY1 region spans residues 642–686; that stretch reads EIANYEACLKEEVEKRKKFKIDDQRRTHNYDEFICTFISMLAQEG. A ULD domain is found at 670 to 698; that stretch reads NYDEFICTFISMLAQEGMLANLVEQNISV. Positions 699-701 are interaction with nucleosomal DNA forming a DNA clamp with ASXL1; sequence RRR. The short motif at 699–722 is the Classical bipartite Nuclear localization signal (NLS) element; the sequence is RRRQGVSIGRLHKQRKPDRRKRSR. Residues 703–729 form a disordered region; that stretch reads GVSIGRLHKQRKPDRRKRSRPYKAKRQ. A positively charged C-terminal extension (CTE) region spans residues 713–729; sequence RKPDRRKRSRPYKAKRQ. The Non-classical PY-nuclear localization signal (PY-NLS) signature appears at 717–724; it reads RRKRSRPY.

Belongs to the peptidase C12 family. BAP1 subfamily. As to quaternary structure, core component of the polycomb repressive deubiquitinase (PR-DUB) complex, at least composed of BAP1, one of ASXL1, ASXL2 or (probably) ASXL3, and one of MBD5 or MBD6. The PR-DUB core associates with a number of accessory proteins, including FOXK1, FOXK2, KDM1B, HCFC1, YY1 and OGT; KDM1B specifically associates with ASXL2 PR-DUB complexes. The BAP1 deubiquitinase activity is not required for PR-DUB assembly. Homodimerizes (via coiled-coil hinge-region between the UCH and ULD domains) to mediate assembly of 2 copies of the BAP1-ASXL heterodimer into a bisymmetric tetramer; dimerization enhances association with nucleosomes. The PR-DUB complex associates with nucleosomes to mediate deubiquitination of 'lys-120' of histone H2AK118ub1 substrates; the association requires the positively charged C-terminal tail of BAP1. Interacts (via ULD domain) with ASXL1 (via DEUBAD domain); the interaction is direct and forms a ubiquitin binding cleft. The interaction with ASXL1 stabilizes BAP1 but is not required for nucleosome binding. Associates (via C-terminus) with nucleosome and chromatosome complexes through direct interaction with DNA and the histone3/4 dimer; this association displaces the histone-2A C-terminal tail, extending and orienting the H2AK118ub1 substrate towards the BAP1 deubiquitinase active site. Also interacts (via arginine finger) directly with the histone H2A-H2B acidic patch; this interaction is not critical for nucleosome-chromatosome association but may play a role in orienting the H2AK118ub1 substrate towards the PR-DUB complex active site. Interacts with BRCA1 (via the RING finger). Interacts (via HBM-like motif) with HCFC1. Interacts (via a C-terminal region overlapping the ULD domain) with YY1; the interaction is direct and requires the interaction with HCFC1. Interacts (when phosphorylated at Thr-493) with FOXK1. Interacts (when phosphorylated at Thr-493) with FOXK2; leading to recruitment of the PR-DUB complex and repression of FOXK2 target genes. Interacts (via non-classical PY-NLS) with TNPO1/transportin-1 (via HEAT repeats 8-12); the interaction is direct, mediates BAP1 nuclear localization and disrupts BAP1 homodimerization. Interacts (via C-terminus) with KPNA1/importin alpha5 and KPNA2/importin alpha1; these interactions can contribute to BAP1 nuclear localization but are less important than the interaction with TNPO1/transportin-1. The interaction with TNPO1/transportin-1 disrupts homodimerization and blocks ubiquitination by UBE2O. Post-translationally, ubiquitinated: monoubiquitinated at multiple sites within its nuclear localization signal (NLS) BY UBE2O, leading to cytoplasmic retention. Able to mediate autodeubiquitination via intramolecular interactions to counteract cytoplasmic retention. Monoubiquitinated on at least 4 sites near or within its PY-NLS. Highly expressed in testis, placenta and ovary. Expressed in breast. levels in the placenta increase over the course of pregnancy.

Its subcellular location is the cytoplasm. The protein localises to the nucleus. It is found in the chromosome. It catalyses the reaction Thiol-dependent hydrolysis of ester, thioester, amide, peptide and isopeptide bonds formed by the C-terminal Gly of ubiquitin (a 76-residue protein attached to proteins as an intracellular targeting signal).. Its function is as follows. Deubiquitinating enzyme that plays a key role in chromatin by mediating deubiquitination of histone H2A and HCFC1. Catalytic component of the polycomb repressive deubiquitinase (PR-DUB) complex, a complex that specifically mediates deubiquitination of histone H2A monoubiquitinated at 'Lys-120' (H2AK119ub1). Does not deubiquitinate monoubiquitinated histone H2B. The PR-DUB complex is an epigenetic regulator of gene expression and acts as a transcriptional coactivator, affecting genes involved in development, cell communication, signaling, cell proliferation and cell viability. Antagonizes PRC1 mediated H2AK119ub1 monoubiquitination. As part of the PR-DUB complex, associates with chromatin enriched in histone marks H3K4me1, H3K4me3, and H3K27Ac, but not in H3K27me3. Recruited to specific gene-regulatory regions by YY1. Acts as a regulator of cell growth by mediating deubiquitination of HCFC1 N-terminal and C-terminal chains, with some specificity toward 'Lys-48'-linked polyubiquitin chains compared to 'Lys-63'-linked polyubiquitin chains. Deubiquitination of HCFC1 does not lead to increase stability of HCFC1. Interferes with the BRCA1 and BARD1 heterodimer activity by inhibiting their ability to mediate ubiquitination and autoubiquitination. It however does not mediate deubiquitination of BRCA1 and BARD1. Able to mediate autodeubiquitination via intramolecular interactions to counteract monoubiquitination at the nuclear localization signal (NLS), thereby protecting it from cytoplasmic sequestration. Negatively regulates epithelial-mesenchymal transition (EMT) of trophoblast stem cells during placental development by regulating genes involved in epithelial cell integrity, cell adhesion and cytoskeletal organization. In Homo sapiens (Human), this protein is Ubiquitin carboxyl-terminal hydrolase BAP1.